We begin with the raw amino-acid sequence, 364 residues long: GDSL esterase/lipase EXL3 (364 aa).

A signal peptide spans 1–32; sequence MKDNSSWSCSCSWSSWKICLLSVLFLTETITA. Ser50 acts as the Nucleophile in catalysis. Catalysis depends on residues Asp339 and His342.

This sequence belongs to the 'GDSL' lipolytic enzyme family. In terms of tissue distribution, flower buds.

The protein localises to the secreted. The sequence is that of GDSL esterase/lipase EXL3 (EXL3) from Arabidopsis thaliana (Mouse-ear cress).